The primary structure comprises 340 residues: Hyaluronan and proteoglycan link protein 2 (340 aa).

Residues 1–26 form the signal peptide; it reads MPGWLTLPTLCRFLLWAFTIFHKAQG. The Ig-like V-type domain occupies 34–144; sequence PHYLLPPIHE…EDESVALTLS (111 aa). Disulfide bonds link cysteine 57/cysteine 128, cysteine 170/cysteine 240, cysteine 194/cysteine 215, cysteine 265/cysteine 336, and cysteine 290/cysteine 311. Link domains follow at residues 148–242 and 245–338; these read VVFP…FCFT and LAGQ…YCYA.

Belongs to the HAPLN family. Expressed only in adult brain.

Its subcellular location is the secreted. The protein localises to the extracellular space. It is found in the extracellular matrix. Its function is as follows. Mediates a firm binding of versican V2 to hyaluronic acid. May play a pivotal role in the formation of the hyaluronan-associated matrix in the central nervous system (CNS) which facilitates neuronal conduction and general structural stabilization. Binds to hyaluronic acid. The polypeptide is Hyaluronan and proteoglycan link protein 2 (HAPLN2) (Homo sapiens (Human)).